Reading from the N-terminus, the 259-residue chain is uncharacterized protein (259 aa).

The ABC transporter domain maps to 4–248 (LQTTNLSKTY…SILDTLSVLG (245 aa)). Position 42–49 (42–49 (GPSGSGKT)) interacts with ATP.

The protein belongs to the ABC transporter superfamily.

This is an uncharacterized protein from Bacillus subtilis (strain 168).